Reading from the N-terminus, the 182-residue chain is Protein SrpB (182 aa).

A run of 4 helical transmembrane segments spans residues Trp11–Asn31, Thr43–Gly63, Leu73–Leu93, and Ile116–Ile136.

The protein belongs to the MgtC/SapB family.

Its subcellular location is the cell membrane. This is Protein SrpB (srpB) from Synechococcus elongatus (strain ATCC 33912 / PCC 7942 / FACHB-805) (Anacystis nidulans R2).